The primary structure comprises 76 residues: Nemertide alpha-1 (76 aa).

The N-terminal stretch at 1–28 is a signal peptide; it reads YRIASSSIAKMKTAVFLVGLLFLGLVFA. The propeptide occupies 29-44; that stretch reads DEAAIDSEFDQSIDKR. 3 disulfide bridges follow: Cys-46/Cys-60, Cys-53/Cys-64, and Cys-59/Cys-70. 4-hydroxyproline is present on residues Pro-72 and Pro-73.

This sequence belongs to the nemertide family. In terms of tissue distribution, confined to the epidermis and to the mucus layer.

It localises to the secreted. Its function is as follows. Highly potent toxin against insect sodium channel (Nav) and with less potent activity against mammalian sodium channels. Potently inhibits inactivation of insect sodium channels of B.germanica (BgNav1) (EC(50)=8.6 nM), D.melanogaster (Dm Nav1), and arachnid sodium channel V.destructor (VdNav1). Also delays the inactivation of most mammalian Nav channels tested (human Nav1.1/SCN1A; EC(50)=124.1 nM, rat Nav1.2/SCN2A; EC(50)=359.6 nM, rat Nav1.3/SCN3A; EC(50)=135.4 nM, rat Nav1.4/SCN4A; EC(50)=145.5 nM, human Nav1.5/SCN5A; EC(50)=138.3 nM, mouse Nav1.6/SCN8A; EC(50)=240.4 nM, human Nav1.9/SCN9A; EC(50)=76.5 nM). 1 uM is enough to completely inhibits the inactivation, resulting in sustained non-inactivating currents. In addition, the toxin significantly enhances the recovery from inactivation, and the open state is not required for the toxin to interact with the channel. In vivo, injection into green crabs (Carcinus maenas at 1 mug/kg) of small doses (1-5 ug/kg) results in slow and fast permanent paralysis, whereas injection of high doses (more than 10 ug/kg) causes death. Injection into juvenile Blaptica dubia cockroaches results in death or permanent paralysis at doses higher than 7.1 ug/kg. Injection into brine shrimp (Artemia salina) stops movement or causes death after 24 hours (EC(50)=0.3 uM). In the rare inherited cardiac arrhythmia Brugada syndrome 1 (BRGDA1), this toxin is able to restore the loss of function by reducing channel inactivation, without affecting activation, by binding to Nav1.5/SCN5A. This chain is Nemertide alpha-1, found in Lineus lacteus (Ribbon worm).